The following is a 935-amino-acid chain: Mannosyltransferase regulator 14 (935 aa).

Residues 1–21 (MMLSLRRFSMYVLRSLRLHFK) lie on the Cytoplasmic side of the membrane. Residues 22–42 (KIIITLLTIQLLFITIFVLGG) traverse the membrane as a helical; Signal-anchor for type II membrane protein segment. At 43–935 (RSSIIDGNWK…NNIFGSDQKY (893 aa)) the chain is on the lumenal side. Residues 498–500 (DHD) carry the DXD motif.

It belongs to the MNN4 family.

Its subcellular location is the golgi apparatus membrane. Its function is as follows. Plays a role in N-glycan mannosylphosphorylation and has partially redundant function with MNN4. The sequence is that of Mannosyltransferase regulator 14 from Saccharomyces cerevisiae (strain ATCC 204508 / S288c) (Baker's yeast).